The sequence spans 363 residues: G-protein coupled receptor 4 (363 aa).

Topologically, residues 1–8 are extracellular; the sequence is MGNGTWEG. The N-linked (GlcNAc...) asparagine glycan is linked to Asn3. The helical transmembrane segment at 9–45 threads the bilayer; sequence CHVDSRVDHLFPPSLYIFVIGVGLPTNCLALWAAYRQ. Intrachain disulfides connect Cys9-Cys258 and Cys90-Cys168. The Cytoplasmic segment spans residues 46–49; sequence VRQR. A helical membrane pass occupies residues 50 to 80; that stretch reads NELGVYLMNLSIADLLYICTLPLWVDYFLHH. The Extracellular portion of the chain corresponds to 81–85; it reads DNWIH. The helical transmembrane segment at 86 to 121 threads the bilayer; it reads GPGSCKLFGFIFYTNIYISIAFLCCISVDRYLAVAH. At 122-129 the chain is on the cytoplasmic side; sequence PLRFARLR. The chain crosses the membrane as a helical span at residues 130-156; that stretch reads RVKTAVAVSSVVWATELGANSVPLFHD. Residues 157-172 lie on the Extracellular side of the membrane; the sequence is ELFRDRYNHTFCFEKF. The interval 157-172 is extracellular loop 2 (ECL2); it reads ELFRDRYNHTFCFEKF. Asn164 carries N-linked (GlcNAc...) asparagine glycosylation. A helical transmembrane segment spans residues 173 to 210; sequence PMEGWVAWMNLYRVFVGFLFPWALMLLSYRGILRAVRG. Residues 211–214 lie on the Cytoplasmic side of the membrane; the sequence is SVST. The helical transmembrane segment at 215–250 threads the bilayer; that stretch reads ERQEKAKIKRLALSLIAIVLVCFAPYHVLLLSRSAV. The Extracellular portion of the chain corresponds to 251 to 260; it reads YLGHPWDCGF. The chain crosses the membrane as a helical span at residues 261 to 289; sequence EERVFSAYHSSLAFTSLNCVADPILYCLV. At 290–363 the chain is on the cytoplasmic side; sequence NEGARSDVAK…QLKMLPPPAP (74 aa). Residues 344–363 are disordered; that stretch reads ASPPSQGDQVQLKMLPPPAP.

This sequence belongs to the G-protein coupled receptor 1 family.

The protein localises to the cell membrane. With respect to regulation, activated by a network of residues that connects an extracellular-facing cavity to Glu-145, a conserved charged residue buried in the transmembrane core of the receptor. Protonation likely drives conformational changes in extracellular loop 2 (ECL2), which stabilizes movement of transmembrane 3 (TM3) and a series of rearrangements that connect the extracellular-facing cavity to Glu-145, a residue only conserved in proton-sensing G-protein coupled receptors. Functionally, proton-sensing G-protein coupled receptor activated by extracellular pH, which is required to monitor pH changes and generate adaptive reactions. Activated by an optimal pH of 6.8-7.2. Ligand binding causes a conformation change that triggers signaling via guanine nucleotide-binding proteins (G proteins) and modulates the activity of downstream effectors, such as adenylate cyclase. GPR4 is mainly coupled to G(s) G proteins and mediates activation of adenylate cyclase activity. May also couple with G(q) and G(12)/G(13) G proteins. Acts as a key regulator of respiratory sensitivity to CO2/H(+) in brain retrotrapezoid nucleus neurons: acts by mediating detection of protons generated by the formation of carbonic acid in the blood, an important mechanism to impulse to breathe. Also acts as a regulator of acid secretion in the kidney collecting duct by maintaining acid-base homeostasis in the kidney. Acidosis-induced GPR4 activation increases paracellular gap formation and permeability of vascular endothelial cells, possibly through the G(12)/G(13)/Rho GTPase signaling pathway. The polypeptide is G-protein coupled receptor 4 (GPR4) (Sus scrofa (Pig)).